The chain runs to 588 residues: Aspartate--tRNA ligase (588 aa).

Glu-174 serves as a coordination point for L-aspartate. The segment at 198-201 (QLFK) is aspartate. Arg-220 is an L-aspartate binding site. ATP contacts are provided by residues 220 to 222 (RDE) and Gln-229. His-448 is a binding site for L-aspartate. Glu-482 contacts ATP. Arg-489 serves as a coordination point for L-aspartate. 534 to 537 (GIDR) lines the ATP pocket.

The protein belongs to the class-II aminoacyl-tRNA synthetase family. Type 1 subfamily. In terms of assembly, homodimer.

It localises to the cytoplasm. It carries out the reaction tRNA(Asp) + L-aspartate + ATP = L-aspartyl-tRNA(Asp) + AMP + diphosphate. Catalyzes the attachment of L-aspartate to tRNA(Asp) in a two-step reaction: L-aspartate is first activated by ATP to form Asp-AMP and then transferred to the acceptor end of tRNA(Asp). The polypeptide is Aspartate--tRNA ligase (Xanthomonas campestris pv. campestris (strain 8004)).